The sequence spans 122 residues: Large ribosomal subunit protein uL14 (122 aa).

Belongs to the universal ribosomal protein uL14 family. In terms of assembly, part of the 50S ribosomal subunit. Forms a cluster with proteins L3 and L19. In the 70S ribosome, L14 and L19 interact and together make contacts with the 16S rRNA in bridges B5 and B8.

Binds to 23S rRNA. Forms part of two intersubunit bridges in the 70S ribosome. The chain is Large ribosomal subunit protein uL14 from Agathobacter rectalis (strain ATCC 33656 / DSM 3377 / JCM 17463 / KCTC 5835 / VPI 0990) (Eubacterium rectale).